The sequence spans 379 residues: Chaperone protein DnaJ (379 aa).

The region spanning 5-70 (DYYETLGCDR…QKRAAYDRFG (66 aa)) is the J domain. The CR-type zinc-finger motif lies at 134–212 (GKTAQIKIPT…CGGAGRVTRE (79 aa)). Residues Cys-147, Cys-150, Cys-164, Cys-167, Cys-186, Cys-189, Cys-200, and Cys-203 each contribute to the Zn(2+) site. 4 CXXCXGXG motif repeats span residues 147–154 (CETCSGTG), 164–171 (CRMCGGAG), 186–193 (CPNCQGRG), and 200–207 (CSDCGGAG).

The protein belongs to the DnaJ family. In terms of assembly, homodimer. Requires Zn(2+) as cofactor.

The protein resides in the cytoplasm. Functionally, participates actively in the response to hyperosmotic and heat shock by preventing the aggregation of stress-denatured proteins and by disaggregating proteins, also in an autonomous, DnaK-independent fashion. Unfolded proteins bind initially to DnaJ; upon interaction with the DnaJ-bound protein, DnaK hydrolyzes its bound ATP, resulting in the formation of a stable complex. GrpE releases ADP from DnaK; ATP binding to DnaK triggers the release of the substrate protein, thus completing the reaction cycle. Several rounds of ATP-dependent interactions between DnaJ, DnaK and GrpE are required for fully efficient folding. Also involved, together with DnaK and GrpE, in the DNA replication of plasmids through activation of initiation proteins. This Xanthobacter autotrophicus (strain ATCC BAA-1158 / Py2) protein is Chaperone protein DnaJ.